A 160-amino-acid polypeptide reads, in one-letter code: Large ribosomal subunit protein uL22c (160 aa).

The protein belongs to the universal ribosomal protein uL22 family. As to quaternary structure, part of the 50S ribosomal subunit.

The protein resides in the plastid. Its subcellular location is the chloroplast. This protein binds specifically to 23S rRNA. Functionally, the globular domain of the protein is located near the polypeptide exit tunnel on the outside of the subunit, while an extended beta-hairpin is found that lines the wall of the exit tunnel in the center of the 70S ribosome. The polypeptide is Large ribosomal subunit protein uL22c (rpl22) (Arabidopsis thaliana (Mouse-ear cress)).